Consider the following 348-residue polypeptide: RNA 3'-terminal phosphate cyclase (348 aa).

ATP is bound by residues Gln-101 and 286-289 (HMAD). His-312 serves as the catalytic Tele-AMP-histidine intermediate.

Belongs to the RNA 3'-terminal cyclase family. Type 1 subfamily.

Its subcellular location is the cytoplasm. It carries out the reaction a 3'-end 3'-phospho-ribonucleotide-RNA + ATP = a 3'-end 2',3'-cyclophospho-ribonucleotide-RNA + AMP + diphosphate. Its function is as follows. Catalyzes the conversion of 3'-phosphate to a 2',3'-cyclic phosphodiester at the end of RNA. The mechanism of action of the enzyme occurs in 3 steps: (A) adenylation of the enzyme by ATP; (B) transfer of adenylate to an RNA-N3'P to produce RNA-N3'PP5'A; (C) and attack of the adjacent 2'-hydroxyl on the 3'-phosphorus in the diester linkage to produce the cyclic end product. The biological role of this enzyme is unknown but it is likely to function in some aspects of cellular RNA processing. This is RNA 3'-terminal phosphate cyclase from Pyrobaculum aerophilum (strain ATCC 51768 / DSM 7523 / JCM 9630 / CIP 104966 / NBRC 100827 / IM2).